A 327-amino-acid chain; its full sequence is Complex I intermediate-associated protein 30, mitochondrial (327 aa).

A mitochondrion-targeting transit peptide spans 1-24 (MALVHKLLRGTYFLRKFSKPTSAL). Residues 42–63 (PVASPGKASSQRKTEGDLQGDH) form a disordered region. Over residues 53 to 63 (RKTEGDLQGDH) the composition is skewed to basic and acidic residues. S318 carries the post-translational modification Phosphoserine.

The protein belongs to the CIA30 family. In terms of assembly, part of the mitochondrial complex I assembly/MCIA complex that comprises at least the core subunits TMEM126B, NDUFAF1, ECSIT and ACAD9 and complement subunits such as COA1 and TMEM186. Interacts with ECSIT. Interacts with ACAD9. At early stages of complex I assembly, it is found in intermediate subcomplexes that contain different subunits including NDUFB6, NDUFA6, NDUFA9, NDUFS3, NDUFS7, ND1, ND2 and ND3. Interacts with TMEM70 and TMEM242. In terms of tissue distribution, ubiquitous.

The protein resides in the mitochondrion. The protein localises to the mitochondrion matrix. As part of the MCIA complex, involved in the assembly of the mitochondrial complex I. The sequence is that of Complex I intermediate-associated protein 30, mitochondrial from Homo sapiens (Human).